We begin with the raw amino-acid sequence, 423 residues long: Gamma-glutamyl phosphate reductase (423 aa).

Belongs to the gamma-glutamyl phosphate reductase family.

It is found in the cytoplasm. It carries out the reaction L-glutamate 5-semialdehyde + phosphate + NADP(+) = L-glutamyl 5-phosphate + NADPH + H(+). It participates in amino-acid biosynthesis; L-proline biosynthesis; L-glutamate 5-semialdehyde from L-glutamate: step 2/2. Catalyzes the NADPH-dependent reduction of L-glutamate 5-phosphate into L-glutamate 5-semialdehyde and phosphate. The product spontaneously undergoes cyclization to form 1-pyrroline-5-carboxylate. This is Gamma-glutamyl phosphate reductase from Roseiflexus castenholzii (strain DSM 13941 / HLO8).